Consider the following 167-residue polypeptide: Lipoprotein signal peptidase (167 aa).

3 consecutive transmembrane segments (helical) span residues 12–32, 68–88, and 99–119; these read WLWL…AVVK, WQRW…IHWL, and GIAY…RLVL. Active-site residues include Asp124 and Asp142. Residues 137–157 traverse the membrane as a helical segment; it reads AFNLADSFIFIGAAMIVLDGF.

It belongs to the peptidase A8 family.

Its subcellular location is the cell inner membrane. It carries out the reaction Release of signal peptides from bacterial membrane prolipoproteins. Hydrolyzes -Xaa-Yaa-Zaa-|-(S,diacylglyceryl)Cys-, in which Xaa is hydrophobic (preferably Leu), and Yaa (Ala or Ser) and Zaa (Gly or Ala) have small, neutral side chains.. It functions in the pathway protein modification; lipoprotein biosynthesis (signal peptide cleavage). This protein specifically catalyzes the removal of signal peptides from prolipoproteins. The sequence is that of Lipoprotein signal peptidase from Aeromonas hydrophila subsp. hydrophila (strain ATCC 7966 / DSM 30187 / BCRC 13018 / CCUG 14551 / JCM 1027 / KCTC 2358 / NCIMB 9240 / NCTC 8049).